The sequence spans 335 residues: Beta-hexosaminidase (335 aa).

Residues D60, R68, R133, and 163–164 (KH) contribute to the substrate site. Catalysis depends on H176, which acts as the Proton donor/acceptor. D247 serves as the catalytic Nucleophile.

This sequence belongs to the glycosyl hydrolase 3 family. NagZ subfamily.

Its subcellular location is the cytoplasm. It catalyses the reaction Hydrolysis of terminal non-reducing N-acetyl-D-hexosamine residues in N-acetyl-beta-D-hexosaminides.. It participates in cell wall biogenesis; peptidoglycan recycling. Plays a role in peptidoglycan recycling by cleaving the terminal beta-1,4-linked N-acetylglucosamine (GlcNAc) from peptide-linked peptidoglycan fragments, giving rise to free GlcNAc, anhydro-N-acetylmuramic acid and anhydro-N-acetylmuramic acid-linked peptides. This is Beta-hexosaminidase from Stenotrophomonas maltophilia (strain R551-3).